Consider the following 1014-residue polypeptide: DNA translocase FtsK 2 (1014 aa).

A helical transmembrane segment spans residues 1–21; sequence MFWIVLIVILLLALAGLFFVR. Disordered stretches follow at residues 89–142, 283–318, and 487–525; these read ESEP…EDIA, RHAG…RRRV, and SQAV…AVSE. Residues 121 to 140 show a composition bias toward acidic residues; it reads EEAETEEAEAAEEEAADTED. The span at 298–307 shows a compositional bias: polar residues; sequence DVSQGQSVSD. In terms of domain architecture, FtsK spans 662-871; it reads GQPVVTDLGK…FQVSSKIDSR (210 aa). 682–687 contributes to the ATP binding site; that stretch reads GSGKSV.

Belongs to the FtsK/SpoIIIE/SftA family. As to quaternary structure, homohexamer. Forms a ring that surrounds DNA.

It is found in the cell inner membrane. Its function is as follows. Essential cell division protein that coordinates cell division and chromosome segregation. The N-terminus is involved in assembly of the cell-division machinery. The C-terminus functions as a DNA motor that moves dsDNA in an ATP-dependent manner towards the dif recombination site, which is located within the replication terminus region. Translocation stops specifically at Xer-dif sites, where FtsK interacts with the Xer recombinase, allowing activation of chromosome unlinking by recombination. FtsK orienting polar sequences (KOPS) guide the direction of DNA translocation. FtsK can remove proteins from DNA as it translocates, but translocation stops specifically at XerCD-dif site, thereby preventing removal of XerC and XerD from dif. This chain is DNA translocase FtsK 2 (ftsK2), found in Neisseria meningitidis serogroup A / serotype 4A (strain DSM 15465 / Z2491).